Consider the following 443-residue polypeptide: MNNEIVNSTIDGVLNTKLHIQNIPPHITDVHLRSLLGNVGFIKDICYFNKSKKQMNNNNFANKKIYNTALVTFNTHEEALNVLKNIKNLIDTSGEERNIDAKFAVPNVSINNNNNNNNSNTFFQKNNMNNTNFSQGSTNYGSNYNSENFQGNNNMNNYNFYNNNSSNNNNNNQTNTQNNFMNRNMKNKNMNNNNNNNNSNNNMMMNMNFNNNQQMNNNPMLNQNNFMLNNNNNYNNNAKNVNDMYRDGEMSPNHLNNNNNNINNNNNNNNNNNNNNNVMFRQNNSHLAQMYQANDNSLEDVENVDGLSLWEMYKDKNNNIFYYNNLTKHANGINLFTQTNYSSITIMKKQNKMDLVEVTYLFSTYLVNGQTLIYSNISVVLVILYHQKFKETVLGRNSGFGFVSYDNVISAQHAIQFMNGYFVNNKYLKVQLKKGETVENTNS.

The region spanning 16–106 (TKLHIQNIPP…RNIDAKFAVP (91 aa)) is the RRM 1 domain. The disordered stretch occupies residues 253 to 279 (NHLNNNNNNINNNNNNNNNNNNNNNVM). Residues 256–277 (NNNNNNINNNNNNNNNNNNNNN) are compositionally biased toward low complexity. An RRM 2 domain is found at 342 to 435 (SSITIMKKQN…KYLKVQLKKG (94 aa)).

The protein is Clustered-asparagine-rich protein of Plasmodium falciparum.